A 579-amino-acid polypeptide reads, in one-letter code: Zinc metalloproteinase nas-11 (579 aa).

The signal sequence occupies residues 1–17 (MTPSLVFLIVVIVVVEG). The propeptide occupies 18 to 328 (QGWRPWDRFN…AAPGSSRLKK (311 aa)). Residues 35–58 (WGGNNWGTRQRNQEPHDIPPPVPP) are disordered. An N-linked (GlcNAc...) asparagine glycan is attached at Asn256. The segment covering 293–312 (GDDEIPLPDADTDDEDDDDS) has biased composition (acidic residues). The interval 293 to 323 (GDDEIPLPDADTDDEDDDDSTNSASGAAPGS) is disordered. The 208-residue stretch at 329 to 536 (SALYFEGNLI…IELLKKMYCQ (208 aa)) folds into the Peptidase M12A domain. 5 disulfide bridges follow: Cys375–Cys535, Cys401–Cys421, Cys539–Cys575, Cys546–Cys568, and Cys555–Cys572. His430 contacts Zn(2+). Glu431 is a catalytic residue. Zn(2+) is bound by residues His434 and His440. N-linked (GlcNAc...) asparagine glycosylation occurs at Asn454. The ShKT domain maps to 539-575 (CDDKNVYCGAWALKDLCKNPGHDQYMAANCKKSCGLC).

The cofactor is Zn(2+). In terms of tissue distribution, expressed in the anterior part of the intestine, CEP neurons and to a lesser extent in hypodermis.

The protein localises to the secreted. In terms of biological role, metalloprotease. This chain is Zinc metalloproteinase nas-11 (nas-11), found in Caenorhabditis elegans.